The sequence spans 299 residues: Pyridoxal 5'-phosphate synthase subunit PdxS (299 aa).

D29 serves as a coordination point for D-ribose 5-phosphate. The active-site Schiff-base intermediate with D-ribose 5-phosphate is K86. G158 lines the D-ribose 5-phosphate pocket. A D-glyceraldehyde 3-phosphate-binding site is contributed by R170. D-ribose 5-phosphate is bound by residues G219 and 240–241; that span reads GS.

It belongs to the PdxS/SNZ family. In the presence of PdxT, forms a dodecamer of heterodimers.

The enzyme catalyses aldehydo-D-ribose 5-phosphate + D-glyceraldehyde 3-phosphate + L-glutamine = pyridoxal 5'-phosphate + L-glutamate + phosphate + 3 H2O + H(+). It participates in cofactor biosynthesis; pyridoxal 5'-phosphate biosynthesis. Catalyzes the formation of pyridoxal 5'-phosphate from ribose 5-phosphate (RBP), glyceraldehyde 3-phosphate (G3P) and ammonia. The ammonia is provided by the PdxT subunit. Can also use ribulose 5-phosphate and dihydroxyacetone phosphate as substrates, resulting from enzyme-catalyzed isomerization of RBP and G3P, respectively. This chain is Pyridoxal 5'-phosphate synthase subunit PdxS, found in Mycobacterium bovis (strain ATCC BAA-935 / AF2122/97).